The chain runs to 342 residues: MVIALDAMGGDFGPVVTVPASLQALSLYPKLRLLLVGNPDAILPILATSKSIGLDRLTVIPARSVISGDARPSQAIRVSKDTSMRVALELIKSGRAHACVSAGNTGALMGLSKLVLKSVHGIERPALTTLLPHQKQGKTVILDLGANISCDGAMLVQFAIMGSVLSKQILGVSNPRVALLNIGSEETKGLDNIRHASRILHTISSIHYVGYVEANDLLMGKTDVLVCDGFIGNITLKTMEGVIRVILSTLQSSEKKNKLNWFMQIINSWIRKYLFKQFNQFNPDWYNGAHLVGLRSTVIKSHGAANQHAFIAAITQAMHSVEREVPEKISHQLSTVLSKNNH.

Belongs to the PlsX family. As to quaternary structure, homodimer. Probably interacts with PlsY.

It localises to the cytoplasm. The catalysed reaction is a fatty acyl-[ACP] + phosphate = an acyl phosphate + holo-[ACP]. Its pathway is lipid metabolism; phospholipid metabolism. Catalyzes the reversible formation of acyl-phosphate (acyl-PO(4)) from acyl-[acyl-carrier-protein] (acyl-ACP). This enzyme utilizes acyl-ACP as fatty acyl donor, but not acyl-CoA. The chain is Phosphate acyltransferase from Blochmanniella pennsylvanica (strain BPEN).